Here is a 187-residue protein sequence, read N- to C-terminus: Protein ECM23 (187 aa).

Disordered stretches follow at residues 106–127 (GKKSLAGYRPKSRKKQTILPNG) and 167–187 (KKIRSQQSSDDGTKNFIFKNK). A GATA-type zinc finger spans residues 126–180 (NGQPKECATCGDTWTSQWRSGPNGNVELCSRCGIAYRKKMEKKIRSQQSSDDGTK).

In terms of biological role, involved in morphogenesis. May be involved in cell wall organization and biogenesis. The polypeptide is Protein ECM23 (ECM23) (Saccharomyces cerevisiae (strain ATCC 204508 / S288c) (Baker's yeast)).